The following is a 158-amino-acid chain: Crossover junction endodeoxyribonuclease RuvC (158 aa).

Catalysis depends on residues aspartate 7, glutamate 67, and aspartate 140. Mg(2+)-binding residues include aspartate 7, glutamate 67, and aspartate 140.

This sequence belongs to the RuvC family. In terms of assembly, homodimer which binds Holliday junction (HJ) DNA. The HJ becomes 2-fold symmetrical on binding to RuvC with unstacked arms; it has a different conformation from HJ DNA in complex with RuvA. In the full resolvosome a probable DNA-RuvA(4)-RuvB(12)-RuvC(2) complex forms which resolves the HJ. Mg(2+) serves as cofactor.

It localises to the cytoplasm. The catalysed reaction is Endonucleolytic cleavage at a junction such as a reciprocal single-stranded crossover between two homologous DNA duplexes (Holliday junction).. Functionally, the RuvA-RuvB-RuvC complex processes Holliday junction (HJ) DNA during genetic recombination and DNA repair. Endonuclease that resolves HJ intermediates. Cleaves cruciform DNA by making single-stranded nicks across the HJ at symmetrical positions within the homologous arms, yielding a 5'-phosphate and a 3'-hydroxyl group; requires a central core of homology in the junction. The consensus cleavage sequence is 5'-(A/T)TT(C/G)-3'. Cleavage occurs on the 3'-side of the TT dinucleotide at the point of strand exchange. HJ branch migration catalyzed by RuvA-RuvB allows RuvC to scan DNA until it finds its consensus sequence, where it cleaves and resolves the cruciform DNA. The chain is Crossover junction endodeoxyribonuclease RuvC from Dictyoglomus thermophilum (strain ATCC 35947 / DSM 3960 / H-6-12).